A 263-amino-acid polypeptide reads, in one-letter code: Proliferating cell nuclear antigen (263 aa).

A DNA-binding region spans residues 61–80 (RCDRTINLGLSLANMSKALK).

This sequence belongs to the PCNA family. In terms of assembly, homotrimer. Forms a complex with activator 1 heteropentamer in the presence of ATP.

It localises to the nucleus. Functionally, this protein is an auxiliary protein of DNA polymerase delta and is involved in the control of eukaryotic DNA replication by increasing the polymerase's processibility during elongation of the leading strand. The chain is Proliferating cell nuclear antigen (pcn-1) from Caenorhabditis elegans.